The primary structure comprises 101 residues: Small ribosomal subunit protein uS14 (101 aa).

Belongs to the universal ribosomal protein uS14 family. As to quaternary structure, part of the 30S ribosomal subunit. Contacts proteins S3 and S10.

Functionally, binds 16S rRNA, required for the assembly of 30S particles and may also be responsible for determining the conformation of the 16S rRNA at the A site. The sequence is that of Small ribosomal subunit protein uS14 from Haemophilus influenzae (strain PittGG).